The following is a 503-amino-acid chain: Aspartyl/glutamyl-tRNA(Asn/Gln) amidotransferase subunit B (503 aa).

The protein belongs to the GatB/GatE family. GatB subfamily. Heterotrimer of A, B and C subunits.

It carries out the reaction L-glutamyl-tRNA(Gln) + L-glutamine + ATP + H2O = L-glutaminyl-tRNA(Gln) + L-glutamate + ADP + phosphate + H(+). The catalysed reaction is L-aspartyl-tRNA(Asn) + L-glutamine + ATP + H2O = L-asparaginyl-tRNA(Asn) + L-glutamate + ADP + phosphate + 2 H(+). Its function is as follows. Allows the formation of correctly charged Asn-tRNA(Asn) or Gln-tRNA(Gln) through the transamidation of misacylated Asp-tRNA(Asn) or Glu-tRNA(Gln) in organisms which lack either or both of asparaginyl-tRNA or glutaminyl-tRNA synthetases. The reaction takes place in the presence of glutamine and ATP through an activated phospho-Asp-tRNA(Asn) or phospho-Glu-tRNA(Gln). The chain is Aspartyl/glutamyl-tRNA(Asn/Gln) amidotransferase subunit B from Rhodococcus jostii (strain RHA1).